The chain runs to 241 residues: Phosphoadenosine 5'-phosphosulfate reductase (241 aa).

Cys-235 acts as the Nucleophile; cysteine thiosulfonate intermediate in catalysis.

It belongs to the PAPS reductase family. CysH subfamily.

The protein resides in the cytoplasm. It carries out the reaction [thioredoxin]-disulfide + sulfite + adenosine 3',5'-bisphosphate + 2 H(+) = [thioredoxin]-dithiol + 3'-phosphoadenylyl sulfate. It participates in sulfur metabolism; hydrogen sulfide biosynthesis; sulfite from sulfate: step 3/3. Functionally, catalyzes the formation of sulfite from phosphoadenosine 5'-phosphosulfate (PAPS) using thioredoxin as an electron donor. This Xanthomonas oryzae pv. oryzae (strain MAFF 311018) protein is Phosphoadenosine 5'-phosphosulfate reductase.